Consider the following 558-residue polypeptide: Arginine--tRNA ligase (558 aa).

Positions Pro119 to His129 match the 'HIGH' region motif.

It belongs to the class-I aminoacyl-tRNA synthetase family. In terms of assembly, monomer.

The protein localises to the cytoplasm. It carries out the reaction tRNA(Arg) + L-arginine + ATP = L-arginyl-tRNA(Arg) + AMP + diphosphate. The polypeptide is Arginine--tRNA ligase (Lactobacillus johnsonii (strain CNCM I-12250 / La1 / NCC 533)).